We begin with the raw amino-acid sequence, 460 residues long: ATP synthase subunit beta (460 aa).

ATP is bound at residue 150 to 157; it reads GGAGVGKT.

The protein belongs to the ATPase alpha/beta chains family. As to quaternary structure, F-type ATPases have 2 components, CF(1) - the catalytic core - and CF(0) - the membrane proton channel. CF(1) has five subunits: alpha(3), beta(3), gamma(1), delta(1), epsilon(1). CF(0) has three main subunits: a(1), b(2) and c(9-12). The alpha and beta chains form an alternating ring which encloses part of the gamma chain. CF(1) is attached to CF(0) by a central stalk formed by the gamma and epsilon chains, while a peripheral stalk is formed by the delta and b chains.

The protein resides in the cell inner membrane. The catalysed reaction is ATP + H2O + 4 H(+)(in) = ADP + phosphate + 5 H(+)(out). In terms of biological role, produces ATP from ADP in the presence of a proton gradient across the membrane. The catalytic sites are hosted primarily by the beta subunits. This is ATP synthase subunit beta from Escherichia coli (strain SMS-3-5 / SECEC).